A 244-amino-acid chain; its full sequence is Cell division protein DivIB (244 aa).

Over 1-6 the chain is Cytoplasmic; sequence MKIKWP. A helical transmembrane segment spans residues 7-27; the sequence is LQLWISLAVFVTIAVGTLLLL. The POTRA domain occupies 28 to 104; sequence QPWQTIKTVT…IDIAEKVTAG (77 aa). The Extracellular portion of the chain corresponds to 28–244; the sequence is QPWQTIKTVT…KADNKAHQKQ (217 aa).

It belongs to the FtsQ/DivIB family. DivIB subfamily.

The protein resides in the cell membrane. Functionally, cell division protein that may be involved in stabilizing or promoting the assembly of the division complex. This Leuconostoc kimchii (strain IMSNU 11154 / KCTC 2386 / IH25) protein is Cell division protein DivIB.